We begin with the raw amino-acid sequence, 420 residues long: Glutamyl-tRNA reductase (420 aa).

Substrate-binding positions include 49-52 (TCNR), S109, 114-116 (EPQ), and Q120. Residue C50 is the Nucleophile of the active site. 189–194 (GAGETI) is a binding site for NADP(+).

The protein belongs to the glutamyl-tRNA reductase family. As to quaternary structure, homodimer.

The enzyme catalyses (S)-4-amino-5-oxopentanoate + tRNA(Glu) + NADP(+) = L-glutamyl-tRNA(Glu) + NADPH + H(+). Its pathway is porphyrin-containing compound metabolism; protoporphyrin-IX biosynthesis; 5-aminolevulinate from L-glutamyl-tRNA(Glu): step 1/2. Functionally, catalyzes the NADPH-dependent reduction of glutamyl-tRNA(Glu) to glutamate 1-semialdehyde (GSA). The polypeptide is Glutamyl-tRNA reductase (Proteus mirabilis (strain HI4320)).